The following is a 91-amino-acid chain: UPF0335 protein BRADO1188 (91 aa).

It belongs to the UPF0335 family.

The chain is UPF0335 protein BRADO1188 from Bradyrhizobium sp. (strain ORS 278).